Reading from the N-terminus, the 255-residue chain is F-box only protein 44 (255 aa).

Positions 3–50 (VGNINELPENILLELFIHIPARQLLLRCRPVCSLWRDLIDLVTLWKRK) constitute an F-box domain. Residues 71-252 (FYFLRSLQRN…VTNSSITIGP (182 aa)) enclose the FBA domain.

As to quaternary structure, part of a SCF (SKP1-cullin-F-box) protein ligase complex. Interacts with SKP1 and CUL1. Expressed in brain, liver, pancreas and adipose tissue (at protein level). Widely expressed.

In terms of biological role, substrate-recognition component of the SCF (SKP1-CUL1-F-box protein)-type E3 ubiquitin ligase complex. This is F-box only protein 44 (Fbxo44) from Mus musculus (Mouse).